The chain runs to 277 residues: Probable septum site-determining protein MinC (277 aa).

The interval 137–164 (ATTGNAPAEPAPAEPAAPAAAPQPPAVP) is disordered. Residues 145 to 164 (EPAPAEPAAPAAAPQPPAVP) are compositionally biased toward pro residues.

This sequence belongs to the MinC family. In terms of assembly, interacts with MinD and FtsZ.

Functionally, cell division inhibitor that blocks the formation of polar Z ring septums. Rapidly oscillates between the poles of the cell to destabilize FtsZ filaments that have formed before they mature into polar Z rings. Prevents FtsZ polymerization. This is Probable septum site-determining protein MinC from Bordetella petrii (strain ATCC BAA-461 / DSM 12804 / CCUG 43448).